Reading from the N-terminus, the 281-residue chain is MARRVSTTRLLLLLLLVAAAAAAAAGDQEDPRGGGDNGTARLDRRTKMFLHAARASDGGATGMEKAGLGLFDAFFASLSMILVSEIGDETFIIAALMAMRHPKSTVLSGALSALVVMTILSTGLGRIVPNLISRKHTNSAATVLYAFFGLRLLYIAWRSDSKASQKKEIEEVEEKLEAGQGKSTFRRIFSRFCTPIFLESFVLTFLAEWGDRSQIATIALATHKNAVGVAVGATLGHTICTSFAVVGGSMLASKISQGTVATIGGLLFLGFSLSSYFYPPL.

Positions 1 to 22 are cleaved as a signal peptide; sequence MARRVSTTRLLLLLLLVAAAAA. The next 6 helical transmembrane spans lie at 66 to 86, 105 to 125, 137 to 157, 188 to 208, 226 to 246, and 258 to 278; these read AGLGLFDAFFASLSMILVSEI, TVLSGALSALVVMTILSTGLG, TNSAATVLYAFFGLRLLYIAW, IFSRFCTPIFLESFVLTFLAE, AVGVAVGATLGHTICTSFAVV, and GTVATIGGLLFLGFSLSSYFY.

It belongs to the GDT1 family.

Its subcellular location is the membrane. The sequence is that of GDT1-like protein 4 from Oryza sativa subsp. indica (Rice).